Here is a 354-residue protein sequence, read N- to C-terminus: Heme A synthase (354 aa).

8 helical membrane-spanning segments follow: residues 21-41 (VAVWLLACCFMVAVMVLLGGL), 106-126 (VWGRLIGVVFGLPFLWLALSG), 139-159 (VFLLGAAQGGMGWFMVKSGLV), 171-191 (AHLALAFLIHGWMFWLALDIL), 212-232 (MLGLTGLVIVTLLFGGLVAGL), 268-288 (VQFGHRTLAEITIVVALVGWF), 304-324 (AVGLMALLQVGLGIGTLVMVV), and 326-346 (VWLASAHQMGAMALLTLCLWA). Histidine 272 contacts heme. Histidine 332 serves as a coordination point for heme.

This sequence belongs to the COX15/CtaA family. Type 2 subfamily. In terms of assembly, interacts with CtaB. The cofactor is heme b.

The protein resides in the cell membrane. It catalyses the reaction Fe(II)-heme o + 2 A + H2O = Fe(II)-heme a + 2 AH2. It functions in the pathway porphyrin-containing compound metabolism; heme A biosynthesis; heme A from heme O: step 1/1. Functionally, catalyzes the conversion of heme O to heme A by two successive hydroxylations of the methyl group at C8. The first hydroxylation forms heme I, the second hydroxylation results in an unstable dihydroxymethyl group, which spontaneously dehydrates, resulting in the formyl group of heme A. This chain is Heme A synthase, found in Paramagnetospirillum magneticum (strain ATCC 700264 / AMB-1) (Magnetospirillum magneticum).